Here is a 486-residue protein sequence, read N- to C-terminus: Ribulose bisphosphate carboxylase large chain 3 (486 aa).

The substrate site is built by Asn-125 and Thr-175. The active-site Proton acceptor is the Lys-177. Lys-179 contacts substrate. Mg(2+)-binding residues include Lys-203, Asp-205, and Glu-206. Lys-203 is modified (N6-carboxylysine). His-295 functions as the Proton acceptor in the catalytic mechanism. Substrate is bound by residues Arg-296, His-328, and Ser-380.

Belongs to the RuBisCO large chain family. Type I subfamily. In terms of assembly, heterohexadecamer of 8 large chains and 8 small chains. Requires Mg(2+) as cofactor.

It catalyses the reaction 2 (2R)-3-phosphoglycerate + 2 H(+) = D-ribulose 1,5-bisphosphate + CO2 + H2O. It carries out the reaction D-ribulose 1,5-bisphosphate + O2 = 2-phosphoglycolate + (2R)-3-phosphoglycerate + 2 H(+). In terms of biological role, ruBisCO catalyzes two reactions: the carboxylation of D-ribulose 1,5-bisphosphate, the primary event in carbon dioxide fixation, as well as the oxidative fragmentation of the pentose substrate. Both reactions occur simultaneously and in competition at the same active site. The polypeptide is Ribulose bisphosphate carboxylase large chain 3 (Bradyrhizobium sp. (strain BTAi1 / ATCC BAA-1182)).